We begin with the raw amino-acid sequence, 742 residues long: MKDDFAEEEEVHSFGYKRFGIQEGTQCTKCKNNWALKLSIILLYILCALLTITVAILGYKVVEKMDNVTGGMETSRQTYDDKLTAVESDLKKLGDQTGKKALSTNSELSTFRSDILDLRQQLREITEKTSKNKDTLEKLQASGDALVDRQSQLKETLENNSFLITTVNKTLQAYNGYVTNLQQDTSVLQGNLQSQMYSHNVVIMNLNNLNLTQVQQRNLITNLQRSVDDTSQAIQRIKNDFQNLQQVFLQAKKDTDWLKEKVQSLQTLAANNSALAKANNDTLEDMNSQLSSFTGQMDNITTASQANEQNLKDLQDVHRDAENRTAAKFSQLEERFQLFESDIVNIISNISYTAHYLRTLTSNLNEVRTTCTDTLTKHTDDLTSLNNTLANIRLDSVSLRMQQDLMRSRLDTEVANLSVIMEEMKLVDSKHGQLIKNFTILQGPPGPRGPKGDRGQQGPPGPTGNKGQKGEKGEPGPPGPAGERGPIGPVGPPGERGSKGSKGLQGSKGSRGSPGKPGPQGPSGDPGPPGPPGKDGLPGPQGPPGFQGLQGTVGEPGVPGPRGLPGLPGMPGMPGIKGPPGPPGPSGAAVPLALKTEPTTAPEDNGCLPYWKNFTDKCYYFSTERDFFEDAKLFCERMSSHLVFINTGEEQQWIKNQMVAKQNYWIGLTDLEQENEWRWLDGTLLEYKNWKAGQPDNWGHGHGPGEDCAGLINFGQWNDFPCEDMNHFICEKDRERELAITL.

The Cytoplasmic segment spans residues 1–37 (MKDDFAEEEEVHSFGYKRFGIQEGTQCTKCKNNWALK). A helical; Signal-anchor for type II membrane protein transmembrane segment spans residues 38-58 (LSIILLYILCALLTITVAILG). Residues 59–742 (YKVVEKMDNV…DRERELAITL (684 aa)) lie on the Extracellular side of the membrane. Residue asparagine 67 is glycosylated (N-linked (GlcNAc...) asparagine). The stretch at 73 to 141 (ETSRQTYDDK…NKDTLEKLQA (69 aa)) forms a coiled coil. N-linked (GlcNAc...) asparagine glycosylation is found at asparagine 159 and asparagine 168. Residues 215-254 (QQRNLITNLQRSVDDTSQAIQRIKNDFQNLQQVFLQAKKD) adopt a coiled-coil conformation. Asparagine 271 carries an N-linked (GlcNAc...) asparagine glycan. Residues 296-328 (QMDNITTASQANEQNLKDLQDVHRDAENRTAAK) are a coiled coil. Residues 439–591 (TILQGPPGPR…PPGPSGAAVP (153 aa)) form a disordered region. 2 Collagen-like domains span residues 443 to 502 (GPPG…KGSK) and 527 to 586 (GPPG…PGPS). Low complexity predominate over residues 501–514 (SKGLQGSKGSRGSP). Residues 516-532 (KPGPQGPSGDPGPPGPP) show a composition bias toward pro residues. The segment covering 534 to 556 (KDGLPGPQGPPGFQGLQGTVGEP) has biased composition (low complexity). Cystine bridges form between cysteine 607-cysteine 618, cysteine 635-cysteine 730, and cysteine 708-cysteine 722. The C-type lectin domain occupies 614 to 731 (FTDKCYYFST…CEDMNHFICE (118 aa)). Ca(2+) contacts are provided by phenylalanine 644, asparagine 646, glutamate 650, aspartate 670, and glutamate 674. Lysine 691, glutamine 694, and aspartate 696 together coordinate a carbohydrate. Ca(2+)-binding residues include glutamine 694, aspartate 696, asparagine 697, glutamate 706, aspartate 707, asparagine 718, aspartate 719, and glutamate 731. Position 706 (glutamate 706) interacts with a carbohydrate. A carbohydrate-binding residues include asparagine 718 and aspartate 719.

In terms of assembly, the extracellular domain forms a stable trimer. The extracellular domain interacts with fibrillar amyloid-beta peptide.

The protein resides in the membrane. Scavenger receptor that displays several functions associated with host defense. Promotes binding and phagocytosis of Gram-positive, Gram-negative bacteria and yeast. Mediates the recognition, internalization and degradation of oxidatively modified low density lipoprotein (oxLDL) by vascular endothelial cells. Binds to several carbohydrates including Gal-type ligands, D-galactose, L- and D-fucose, GalNAc, T and Tn antigens in a calcium-dependent manner and internalizes specifically GalNAc in nurse-like cells. Also binds to sialyl Lewis X or a trisaccharide and asialo-orosomucoid (ASOR). This is Collectin-12 (COLEC12) from Bos taurus (Bovine).